Reading from the N-terminus, the 192-residue chain is Probable protein adenylyltransferase y4lH (192 aa).

The 139-residue stretch at 52–190 (LDFAHYRALH…LAPLAAEIRR (139 aa)) folds into the Fido domain. ATP-binding positions include 82–83 (KG) and 139–141 (GNG).

It belongs to the fic family.

The enzyme catalyses L-tyrosyl-[protein] + ATP = O-(5'-adenylyl)-L-tyrosyl-[protein] + diphosphate. The catalysed reaction is L-threonyl-[protein] + ATP = 3-O-(5'-adenylyl)-L-threonyl-[protein] + diphosphate. Its function is as follows. Probable adenylyltransferase that mediates the addition of adenosine 5'-monophosphate (AMP) to specific residues of target proteins. The polypeptide is Probable protein adenylyltransferase y4lH (Sinorhizobium fredii (strain NBRC 101917 / NGR234)).